A 1036-amino-acid chain; its full sequence is Zinc finger protein 532 (1036 aa).

Disordered regions lie at residues 26-92, 106-206, 220-265, and 281-362; these read PKAA…LHNG, GAKS…EAES, RKAE…PSSK, and AASD…KVRI. Over residues 32 to 52 the composition is skewed to basic and acidic residues; it reads SGHDDHESHIKQNAHVDDDSH. Phosphoserine is present on residues serine 130, serine 133, and serine 134. Residues 136 to 151 are compositionally biased toward acidic residues; it reads EEFEDDEKIEVDDPPD. Lysine 175 bears the N6-acetyllysine mark. Over residues 182-193 the composition is skewed to polar residues; sequence ENSSKTGVSTSG. Basic and acidic residues-rich tracts occupy residues 194-205 and 220-249; these read HTDKNKVKREAE and RKAE…EKSD. Residues 253-265 are compositionally biased toward low complexity; it reads AAAASSKTKPSSK. Residues 302 to 314 are compositionally biased toward basic and acidic residues; sequence EVNDSPKAADKSP. Phosphoserine is present on residues serine 306 and serine 313. Residues 336–353 are compositionally biased toward low complexity; that stretch reads SVSSENSSKGSPSSPVGS. Residue serine 433 is modified to Phosphoserine. Residues lysine 458 and lysine 515 each participate in a glycyl lysine isopeptide (Lys-Gly) (interchain with G-Cter in SUMO2) cross-link. A C2H2-type 1; degenerate zinc finger spans residues 615-634; the sequence is YKCLECGDAFALEKSLSQHY. The segment at 751–775 adopts a C2H2-type 2; degenerate zinc-finger fold; that stretch reads LKCLECNEVFQDEPSLATHFQHAAD. The C2H2-type 3 zinc finger occupies 784–807; that stretch reads HPCRQCDKSFSSSHSLCRHNRIKH. A C2H2-type 4; degenerate zinc finger spans residues 814-840; the sequence is YACSHCPDSRRTFTKRLMLERHIQLMH. The interval 847-877 is disordered; that stretch reads VKELSDDAGDVTNDEEEEAEIKEDAKVPSPK. A compositionally biased stretch (acidic residues) spans 852–867; the sequence is DDAGDVTNDEEEEAEI. Over residues 868-877 the composition is skewed to basic and acidic residues; it reads KEDAKVPSPK. Serine 875 is subject to Phosphoserine. Glycyl lysine isopeptide (Lys-Gly) (interchain with G-Cter in SUMO2) cross-links involve residues lysine 879 and lysine 902. 2 consecutive C2H2-type zinc fingers follow at residues 938–961 and 999–1021; these read HQCR…FIVH and RKCK…MRTH. Residues 966–1000 are disordered; the sequence is PQPVSKQNGAGEDSQQENKPSPEDEAAEGAASDRK.

Belongs to the krueppel C2H2-type zinc-finger protein family.

Its subcellular location is the nucleus. May be involved in transcriptional regulation. The protein is Zinc finger protein 532 (Znf532) of Mus musculus (Mouse).